The following is a 453-amino-acid chain: Adenosylmethionine-8-amino-7-oxononanoate aminotransferase (453 aa).

118-119 (GA) provides a ligand contact to pyridoxal 5'-phosphate. Substrate is bound at residue Tyr151. Asp257 contacts pyridoxal 5'-phosphate. Substrate is bound by residues Lys286, Gly321, and Arg416. The residue at position 286 (Lys286) is an N6-(pyridoxal phosphate)lysine.

It belongs to the class-III pyridoxal-phosphate-dependent aminotransferase family. BioA subfamily. In terms of assembly, homodimer. Pyridoxal 5'-phosphate is required as a cofactor.

The protein localises to the cytoplasm. The catalysed reaction is (8S)-8-amino-7-oxononanoate + S-adenosyl-L-methionine = S-adenosyl-4-methylsulfanyl-2-oxobutanoate + (7R,8S)-7,8-diammoniononanoate. It functions in the pathway cofactor biosynthesis; biotin biosynthesis; 7,8-diaminononanoate from 8-amino-7-oxononanoate (SAM route): step 1/1. Its function is as follows. Catalyzes the transfer of the alpha-amino group from S-adenosyl-L-methionine (SAM) to 7-keto-8-aminopelargonic acid (KAPA) to form 7,8-diaminopelargonic acid (DAPA). It is the only aminotransferase known to utilize SAM as an amino donor. The chain is Adenosylmethionine-8-amino-7-oxononanoate aminotransferase from Aquifex aeolicus (strain VF5).